Here is a 156-residue protein sequence, read N- to C-terminus: Deoxyuridine 5'-triphosphate nucleotidohydrolase (156 aa).

Residues 76 to 78, Asn89, 93 to 95, and Lys103 contribute to the substrate site; these read RSG and TVD.

It belongs to the dUTPase family. The cofactor is Mg(2+).

The catalysed reaction is dUTP + H2O = dUMP + diphosphate + H(+). Its pathway is pyrimidine metabolism; dUMP biosynthesis; dUMP from dCTP (dUTP route): step 2/2. This enzyme is involved in nucleotide metabolism: it produces dUMP, the immediate precursor of thymidine nucleotides and it decreases the intracellular concentration of dUTP so that uracil cannot be incorporated into DNA. In Rhizobium etli (strain CIAT 652), this protein is Deoxyuridine 5'-triphosphate nucleotidohydrolase.